The following is a 265-amino-acid chain: DNA repair protein RecO (265 aa).

This sequence belongs to the RecO family.

In terms of biological role, involved in DNA repair and RecF pathway recombination. This Mycolicibacterium paratuberculosis (strain ATCC BAA-968 / K-10) (Mycobacterium paratuberculosis) protein is DNA repair protein RecO.